A 388-amino-acid chain; its full sequence is 5-hydroxytryptamine receptor 4 (388 aa).

Topologically, residues 1–19 are extracellular; it reads MDKLDANVSSEEGFGSVEK. An N-linked (GlcNAc...) asparagine glycan is attached at asparagine 7. The helical transmembrane segment at 20–44 threads the bilayer; sequence VVLLTFLSTVILMAILGNLLVMVAV. Residues 45-54 are Cytoplasmic-facing; sequence CWDRQLRKIK. Residues 55 to 78 traverse the membrane as a helical segment; that stretch reads TNYFIVSLAFADLLVSVLVMPFGA. Residues 79-92 are Extracellular-facing; sequence IELVQDIWIYGEVF. Residues 93 to 117 form a helical membrane-spanning segment; the sequence is CLVRTSLDVLLTTASIFHLCCISLD. A disulfide bridge links cysteine 93 with cysteine 184. Position 100 (aspartate 100) interacts with serotonin. The Cytoplasmic segment spans residues 118 to 133; the sequence is RYYAICCQPLVYRNKM. A helical transmembrane segment spans residues 134–157; it reads TPLRIALMLGGCWVIPTFISFLPI. The Extracellular portion of the chain corresponds to 158–188; sequence MQGWNNIGIIDLIEKRKFNQNSNSTYCVFMV. A helical transmembrane segment spans residues 189–212; it reads NKPYAITCSVVAFYIPFLLMVLAY. Topologically, residues 213–257 are cytoplasmic; the sequence is YRIYVTAKEHAHQIQMLQRAGASSESRPQSADQHSTHRMRTETKA. Residues 258–283 form a helical membrane-spanning segment; it reads AKTLCIIMGCFCLCWAPFFVTNIVDP. Asparagine 279 lines the serotonin pocket. Over 284–290 the chain is Extracellular; it reads FIDYTVP. Residues 291 to 314 traverse the membrane as a helical segment; the sequence is GQVWTAFLWLGYINSGLNPFLYAF. Residues 315–388 lie on the Cytoplasmic side of the membrane; sequence LNKSFRRAFL…PLVAAQPSDT (74 aa).

Belongs to the G-protein coupled receptor 1 family. In terms of assembly, interacts (via C-terminus 330-346 AA) with GRK5; this interaction is promoted by 5-HT (serotonin). Interacts with MAGI2, MPP3, NHERF1 and SNX27 isoforms 1 and 2. Forms a complex including NHERF1 and EZR. As to quaternary structure, interacts with PATJ, NOS1 and SEC23A. As to expression, expressed in ileum, brain, and atrium, but not in the ventricle. In terms of tissue distribution, mainly expressed in atria and cardiac ventricle. Expressed in all cardiovascular tissues analyzed.

The protein localises to the cell membrane. It is found in the endosome membrane. In terms of biological role, G-protein coupled receptor for 5-hydroxytryptamine (serotonin), a biogenic hormone that functions as a neurotransmitter, a hormone and a mitogen. Ligand binding causes a conformation change that triggers signaling via guanine nucleotide-binding proteins (G proteins) and modulates the activity of downstream effectors. HTR4 is coupled to G(s) G alpha proteins and mediates activation of adenylate cyclase activity. The sequence is that of 5-hydroxytryptamine receptor 4 from Homo sapiens (Human).